We begin with the raw amino-acid sequence, 129 residues long: UPF0146 protein VNG_2609C (129 aa).

The protein belongs to the UPF0146 family.

This chain is UPF0146 protein VNG_2609C, found in Halobacterium salinarum (strain ATCC 700922 / JCM 11081 / NRC-1) (Halobacterium halobium).